A 427-amino-acid chain; its full sequence is Dihydroorotase (427 aa).

Residues His-58 and His-60 each contribute to the Zn(2+) site. Substrate contacts are provided by residues His-60–Arg-62 and Asn-92. 3 residues coordinate Zn(2+): Asp-150, His-177, and His-230. Asn-276 lines the substrate pocket. Asp-303 is a binding site for Zn(2+). The active site involves Asp-303. Substrate contacts are provided by residues His-307 and Phe-321–Gly-322.

The protein belongs to the metallo-dependent hydrolases superfamily. DHOase family. Class I DHOase subfamily. Zn(2+) is required as a cofactor.

It catalyses the reaction (S)-dihydroorotate + H2O = N-carbamoyl-L-aspartate + H(+). It participates in pyrimidine metabolism; UMP biosynthesis via de novo pathway; (S)-dihydroorotate from bicarbonate: step 3/3. Its function is as follows. Catalyzes the reversible cyclization of carbamoyl aspartate to dihydroorotate. This chain is Dihydroorotase, found in Macrococcus caseolyticus (strain JCSC5402) (Macrococcoides caseolyticum).